Consider the following 88-residue polypeptide: Small ribosomal subunit protein bS20 (88 aa).

Positions 1-21 (MANSKSAKKRALQSEKRRQHN) are enriched in basic residues. The interval 1–26 (MANSKSAKKRALQSEKRRQHNASRSS) is disordered.

It belongs to the bacterial ribosomal protein bS20 family.

In terms of biological role, binds directly to 16S ribosomal RNA. This is Small ribosomal subunit protein bS20 from Shewanella halifaxensis (strain HAW-EB4).